Consider the following 1388-residue polypeptide: DNA-directed RNA polymerase subunit beta' (1388 aa).

Residues Cys65, Cys67, Cys80, and Cys83 each contribute to the Zn(2+) site. 3 residues coordinate Mg(2+): Asp456, Asp458, and Asp460. Zn(2+) is bound by residues Cys812, Cys887, Cys894, and Cys897.

This sequence belongs to the RNA polymerase beta' chain family. In terms of assembly, the RNAP catalytic core consists of 2 alpha, 1 beta, 1 beta' and 1 omega subunit. When a sigma factor is associated with the core the holoenzyme is formed, which can initiate transcription. Requires Mg(2+) as cofactor. The cofactor is Zn(2+).

It carries out the reaction RNA(n) + a ribonucleoside 5'-triphosphate = RNA(n+1) + diphosphate. DNA-dependent RNA polymerase catalyzes the transcription of DNA into RNA using the four ribonucleoside triphosphates as substrates. This is DNA-directed RNA polymerase subunit beta' from Protochlamydia amoebophila (strain UWE25).